A 78-amino-acid polypeptide reads, in one-letter code: Large ribosomal subunit protein bL28 (78 aa).

It belongs to the bacterial ribosomal protein bL28 family.

This is Large ribosomal subunit protein bL28 from Dichelobacter nodosus (strain VCS1703A).